Consider the following 567-residue polypeptide: Hydrogenase-2 large chain (567 aa).

Ni(2+) contacts are provided by Cys61, Cys64, Cys546, and Cys549. Residues 553–567 (VVDADGNEVVSVKVL) constitute a propeptide that is removed on maturation.

It belongs to the [NiFe]/[NiFeSe] hydrogenase large subunit family. As to quaternary structure, heterodimer of a large and a small subunit. Ni(2+) is required as a cofactor.

It is found in the cell membrane. It carries out the reaction H2 + A = AH2. This is one of three E.coli hydrogenases synthesized in response to different physiological conditions. HYD2 is involved in hydrogen uptake. The chain is Hydrogenase-2 large chain (hybC) from Escherichia coli O157:H7.